Here is a 498-residue protein sequence, read N- to C-terminus: ATP synthase subunit beta, chloroplastic (498 aa).

Residue 172–179 (GGAGVGKT) coordinates ATP.

Belongs to the ATPase alpha/beta chains family. As to quaternary structure, F-type ATPases have 2 components, CF(1) - the catalytic core - and CF(0) - the membrane proton channel. CF(1) has five subunits: alpha(3), beta(3), gamma(1), delta(1), epsilon(1). CF(0) has four main subunits: a(1), b(1), b'(1) and c(9-12).

It localises to the plastid. The protein resides in the chloroplast thylakoid membrane. The catalysed reaction is ATP + H2O + 4 H(+)(in) = ADP + phosphate + 5 H(+)(out). In terms of biological role, produces ATP from ADP in the presence of a proton gradient across the membrane. The catalytic sites are hosted primarily by the beta subunits. The protein is ATP synthase subunit beta, chloroplastic of Eucalyptus globulus subsp. globulus (Tasmanian blue gum).